The following is a 59-amino-acid chain: Cecropin-A2 (59 aa).

Residues 1 to 23 (MNFNKLFAIVLLAALVLLGQTEA) form the signal peptide.

It belongs to the cecropin family.

It localises to the secreted. Functionally, cecropins have lytic and antibacterial activity against several Gram-positive and Gram-negative bacteria. This is Cecropin-A2 (CECA2) from Aedes albopictus (Asian tiger mosquito).